We begin with the raw amino-acid sequence, 331 residues long: Methionyl-tRNA formyltransferase (331 aa).

110 to 113 lines the (6S)-5,6,7,8-tetrahydrofolate pocket; it reads SLLP. A disordered region spans residues 312–331; sequence HAPAERVSAAGSPAGAGGAP.

It belongs to the Fmt family.

The enzyme catalyses L-methionyl-tRNA(fMet) + (6R)-10-formyltetrahydrofolate = N-formyl-L-methionyl-tRNA(fMet) + (6S)-5,6,7,8-tetrahydrofolate + H(+). Attaches a formyl group to the free amino group of methionyl-tRNA(fMet). The formyl group appears to play a dual role in the initiator identity of N-formylmethionyl-tRNA by promoting its recognition by IF2 and preventing the misappropriation of this tRNA by the elongation apparatus. The sequence is that of Methionyl-tRNA formyltransferase from Frankia alni (strain DSM 45986 / CECT 9034 / ACN14a).